Here is a 105-residue protein sequence, read N- to C-terminus: Small ribosomal subunit protein uS10 (105 aa).

Belongs to the universal ribosomal protein uS10 family. Part of the 30S ribosomal subunit.

In terms of biological role, involved in the binding of tRNA to the ribosomes. The polypeptide is Small ribosomal subunit protein uS10 (Synechococcus elongatus (strain ATCC 33912 / PCC 7942 / FACHB-805) (Anacystis nidulans R2)).